We begin with the raw amino-acid sequence, 353 residues long: UDP-xylose transporter 2 (353 aa).

A run of 10 helical transmembrane segments spans residues 7–27, 31–51, 75–95, 100–120, 132–152, 154–174, 194–214, 224–244, 250–270, and 280–300; these read FQLG…SIVI, ALIS…HLLV, VLGF…SLGF, FYQM…TIFF, LVIL…LNML, SVLS…TNTI, AITL…QNVF, FFIV…FLVI, VTYQ…GYLL, and ILGI…CTLE. The disordered stretch occupies residues 308 to 353; it reads TSTQLPQMDENEKDPLVSAENGSGLISDNGVQKQDPVWNSNKDFQA. The segment covering 327–353 has biased composition (polar residues); sequence ENGSGLISDNGVQKQDPVWNSNKDFQA. Phosphoserine is present on Ser-334.

It belongs to the TPT transporter family. TPT (TC 2.A.7.9) subfamily. In terms of tissue distribution, ubiquitous.

It is found in the golgi apparatus membrane. Its function is as follows. Nucleotide-sugar transporter that transports UDP-xylose and UMP in a strict counter-exchange mode. In Arabidopsis thaliana (Mouse-ear cress), this protein is UDP-xylose transporter 2.